Consider the following 310-residue polypeptide: Ribosomal RNA small subunit methyltransferase H (310 aa).

Residues 40-42, Asp59, Phe89, Asp104, and Gln111 contribute to the S-adenosyl-L-methionine site; that span reads GGH.

This sequence belongs to the methyltransferase superfamily. RsmH family.

Its subcellular location is the cytoplasm. The catalysed reaction is cytidine(1402) in 16S rRNA + S-adenosyl-L-methionine = N(4)-methylcytidine(1402) in 16S rRNA + S-adenosyl-L-homocysteine + H(+). Specifically methylates the N4 position of cytidine in position 1402 (C1402) of 16S rRNA. The chain is Ribosomal RNA small subunit methyltransferase H from Amoebophilus asiaticus (strain 5a2).